A 169-amino-acid polypeptide reads, in one-letter code: uncharacterized protein (169 aa).

A helical transmembrane segment spans residues 97-117; it reads IVIFCILVIVAFVIWLVVWLF. Residues 137-169 form a disordered region; the sequence is NYSGLPTPQPTPTHYPAEQYSYDPARDRDNYRY. Basic and acidic residues predominate over residues 160-169; that stretch reads PARDRDNYRY.

It is found in the membrane. This is an uncharacterized protein from Caenorhabditis elegans.